A 494-amino-acid chain; its full sequence is Aldehyde dehydrogenase family 7 member A1 (494 aa).

247 to 252 is an NAD(+) binding site; sequence GSSKVG. E269 acts as the Proton acceptor in catalysis. The active-site Nucleophile is C303.

It belongs to the aldehyde dehydrogenase family. As to quaternary structure, homotetramer.

It carries out the reaction an aldehyde + NAD(+) + H2O = a carboxylate + NADH + 2 H(+). This is Aldehyde dehydrogenase family 7 member A1 (BTG-26) from Brassica napus (Rape).